A 35-amino-acid chain; its full sequence is Potassium channel toxin alpha-KTx 6.1 (35 aa).

4 disulfides stabilise this stretch: cysteine 4–cysteine 25, cysteine 10–cysteine 30, cysteine 14–cysteine 32, and cysteine 20–cysteine 35.

This sequence belongs to the short scorpion toxin superfamily. Potassium channel inhibitor family. Alpha-KTx 06 subfamily. As to expression, expressed by the venom gland.

The protein localises to the secreted. Potently and reversibly inhibits the insect voltage-gated Shaker (Sh) potassium channel (isoform alpha (B)), the mammalian voltage-gated potassium channels Kv1.2/KCNA2 (IC(50)=0.44 nM), and the calcium-activated potassium channel KCa2.3/KCNN3 (Kd=330 nM). Its effect on Kv1.3/KCNA3 is controversial, since this channel is voltage-independently inhibited in PubMed:9464266, but is not affected in PubMed:10931199. Furthermore, this toxin competes with apamin (a small conductance calcium-activated potassium channel inhibitor) for binding to rat brain synaptosomes. The polypeptide is Potassium channel toxin alpha-KTx 6.1 (Pandinus imperator (Emperor scorpion)).